The primary structure comprises 560 residues: E3 SUMO-protein ligase CBX4 (560 aa).

The involved in interaction with H3C15 and H3C1 stretch occupies residues 1-75 (MELPAVGEHV…LMGYRKRGPK (75 aa)). Positions 1–539 (MELPAVGEHV…LSEFKPFFGN (539 aa)) are interaction with BMI1. The 59-residue stretch at 11–69 (FAVESIEKKRIRKGRVEYLVKWRGWSPKYNTWEPEENILDPRLLIAFQNRERQEQLMGY) folds into the Chromo domain. Residues Lys77, Lys106, Lys114, and Lys125 each participate in a glycyl lysine isopeptide (Lys-Gly) (interchain with G-Cter in SUMO2) cross-link. Positions 92–152 (VLTGLQDSST…PPGKSGKYYY (61 aa)) are disordered. Lys149 carries the N6-acetyllysine; alternate modification. Residue Lys149 forms a Glycyl lysine isopeptide (Lys-Gly) (interchain with G-Cter in SUMO2); alternate linkage. Glycyl lysine isopeptide (Lys-Gly) (interchain with G-Cter in SUMO2) cross-links involve residues Lys157, Lys167, and Lys178. Ser182 carries the phosphoserine modification. Residues Lys191, Lys205, Lys212, Lys223, Lys249, Lys268, Lys278, and Lys280 each participate in a glycyl lysine isopeptide (Lys-Gly) (interchain with G-Cter in SUMO2) cross-link. The interval 217–243 (AAGAPGKGSEKGPPNGMMPAPKEAVTG) is disordered. Basic and acidic residues-rich tracts occupy residues 281 to 291 (SGEVAEGEARS) and 298 to 331 (AADE…REEE). The segment at 281 to 404 (SGEVAEGEAR…HHHHHHAVGL (124 aa)) is disordered. Residues Lys320, Lys352, and Lys365 each participate in a glycyl lysine isopeptide (Lys-Gly) (interchain with G-Cter in SUMO2) cross-link. Basic residues predominate over residues 380–401 (PSHHPHPHPHHHHHHHHHHHHA). Ser467 is modified (phosphoserine). Lys494 participates in a covalent cross-link: Glycyl lysine isopeptide (Lys-Gly) (interchain with G-Cter in SUMO2); alternate. A Glycyl lysine isopeptide (Lys-Gly) (interchain with G-Cter in SUMO); alternate cross-link involves residue Lys494. Residue Thr497 is modified to Phosphothreonine; by HIPK2. The segment covering 509-521 (AAPTTTAEKPPAE) has biased composition (low complexity). A disordered region spans residues 509 to 528 (AAPTTTAEKPPAEAQDEPAE). The segment at 531–556 (SEFKPFFGNIIITDVTANCLTVTFKE) is involved in interaction with H3C15 and RNF2. The tract at residues 540 to 560 (IIITDVTANCLTVTFKEYVTV) is interaction with RNF2.

As to quaternary structure, interacts with histone H3-K9Me3. Interacts with CHTOP. Component of a PRC1-like complex. The composition of the PRC1 complex differs between the PRC1 complex in pluripotent embryonic stem cells containing RNF2, CBX7 and PCGF2, and the PRC1 complex in differentiating cells containing RNF2, CBX2, CBX4 and BMI1. Self-associates. Interacts with SUV39H1 and HIPK2. Interacts with CSNK2B. May interact with H3C15, H3C1 and RNF2. Interacts with SUMO1P1/SUMO5. Interacts with PRDM1/Blimp-1. Ubiquitinated. Ubiquitination regulates the function of the Polycomb group (PcG) multiprotein PRC1-like complex. Deubiquitinated by USP26. In terms of processing, phosphorylated on Thr-497 by HIPK2 upon DNA damage. This phosphorylation stimulates E3 SUMO-protein ligase activity and promotes sumoylation on Lys-494, as well as sumoylation of other target proteins, such as HNRNPK. As to expression, ubiquitous.

The protein localises to the nucleus. It localises to the nucleus speckle. The protein operates within protein modification; protein sumoylation. Its function is as follows. E3 SUMO-protein ligase that catalyzes sumoylation of target proteins by promoting the transfer of SUMO from the E2 enzyme to the substrate. Involved in the sumoylation of HNRNPK, a p53/TP53 transcriptional coactivator, hence indirectly regulates p53/TP53 transcriptional activation resulting in p21/CDKN1A expression. Monosumoylates ZNF131. Component of a Polycomb group (PcG) multiprotein PRC1-like complex, a complex class required to maintain the transcriptionally repressive state of many genes, including Hox genes, throughout development. PcG PRC1 complex acts via chromatin remodeling and modification of histones; it mediates monoubiquitination of histone H2A 'Lys-119', rendering chromatin heritably changed in its expressibility. Binds to histone H3 trimethylated at 'Lys-9' (H3K9me3). Plays a role in the lineage differentiation of the germ layers in embryonic development. In Homo sapiens (Human), this protein is E3 SUMO-protein ligase CBX4 (CBX4).